The primary structure comprises 85 residues: Small ribosomal subunit protein uS15c (85 aa).

Belongs to the universal ribosomal protein uS15 family. As to quaternary structure, part of the 30S ribosomal subunit.

It is found in the plastid. It localises to the chloroplast. The polypeptide is Small ribosomal subunit protein uS15c (rps15) (Chaetosphaeridium globosum (Charophycean green alga)).